The sequence spans 116 residues: Class I hydrophobin 1 (116 aa).

The first 19 residues, M1–A19, serve as a signal peptide directing secretion. 4 cysteine pairs are disulfide-bonded: C35–C95, C42–C89, C43–C76, and C96–C109. N44 and N100 each carry an N-linked (GlcNAc...) asparagine glycan.

It belongs to the fungal hydrophobin family. As to quaternary structure, self-assembles to form functional amyloid fibrils called rodlets. Self-assembly into fibrillar rodlets occurs spontaneously at hydrophobic:hydrophilic interfaces and the rodlets further associate laterally to form amphipathic monolayers.

The protein localises to the secreted. Its subcellular location is the cell wall. Its function is as follows. Aerial growth, conidiation, and dispersal of filamentous fungi in the environment rely upon a capability of their secreting small amphipathic proteins called hydrophobins (HPBs) with low sequence identity. Class I can self-assemble into an outermost layer of rodlet bundles on aerial cell surfaces, conferring cellular hydrophobicity that supports fungal growth, development and dispersal; whereas Class II form highly ordered films at water-air interfaces through intermolecular interactions but contribute nothing to the rodlet structure. The sequence is that of Class I hydrophobin 1 from Pleurotus ostreatus (Oyster mushroom).